Reading from the N-terminus, the 173-residue chain is RNA polymerase sigma factor TcsR (173 aa).

The interval 122–169 (IKDLTQNEKNIIRKIYLDRLRESEISRELNISRQAVNKTHLRALEKLK) is sigma-70 factor domain-4. Positions 143-162 (ESEISRELNISRQAVNKTHL) form a DNA-binding region, H-T-H motif.

Belongs to the sigma-70 factor family.

In terms of biological role, sigma factors are initiation factors that promote the attachment of RNA polymerase to specific initiation sites and are then released. Transcriptional regulator specifically required to activate expression of the toxin gene locus, composed of tcsL, tcsH and tcdE/utxA. The chain is RNA polymerase sigma factor TcsR from Paraclostridium sordellii (Clostridium sordellii).